A 203-amino-acid chain; its full sequence is Small ribosomal subunit protein uS7B (203 aa).

This sequence belongs to the universal ribosomal protein uS7 family. As to quaternary structure, component of the small ribosomal subunit (SSU). Mature yeast ribosomes consist of a small (40S) and a large (60S) subunit. The 40S small subunit contains 1 molecule of ribosomal RNA (18S rRNA) and at least 33 different proteins. The large 60S subunit contains 3 rRNA molecules (25S, 5.8S and 5S rRNA) and at least 46 different proteins.

The protein localises to the cytoplasm. In terms of biological role, component of the ribosome, a large ribonucleoprotein complex responsible for the synthesis of proteins in the cell. The small ribosomal subunit (SSU) binds messenger RNAs (mRNAs) and translates the encoded message by selecting cognate aminoacyl-transfer RNA (tRNA) molecules. The large subunit (LSU) contains the ribosomal catalytic site termed the peptidyl transferase center (PTC), which catalyzes the formation of peptide bonds, thereby polymerizing the amino acids delivered by tRNAs into a polypeptide chain. The nascent polypeptides leave the ribosome through a tunnel in the LSU and interact with protein factors that function in enzymatic processing, targeting, and the membrane insertion of nascent chains at the exit of the ribosomal tunnel. The protein is Small ribosomal subunit protein uS7B (rps502) of Schizosaccharomyces pombe (strain 972 / ATCC 24843) (Fission yeast).